A 661-amino-acid polypeptide reads, in one-letter code: UvrABC system protein B (661 aa).

One can recognise a Helicase ATP-binding domain in the interval 28–414 (DGVNERKRHQ…HTDEMVEQII (387 aa)). 41–48 (GATGTGKT) lines the ATP pocket. Residues 94–117 (YYDYYQPEAYVPSTDTFIEKDASI) carry the Beta-hairpin motif. The Helicase C-terminal domain occupies 432–598 (QIDDLLSEIQ…TINKKIHDVI (167 aa)). The disordered stretch occupies residues 603-624 (ESDETNQQQQTELPKKMTKKER). Residues 625 to 660 (QKTIENIEKEMKKAAKDLDFEKATELRDMLFELKAE) enclose the UVR domain.

The protein belongs to the UvrB family. As to quaternary structure, forms a heterotetramer with UvrA during the search for lesions. Interacts with UvrC in an incision complex.

The protein localises to the cytoplasm. Functionally, the UvrABC repair system catalyzes the recognition and processing of DNA lesions. A damage recognition complex composed of 2 UvrA and 2 UvrB subunits scans DNA for abnormalities. Upon binding of the UvrA(2)B(2) complex to a putative damaged site, the DNA wraps around one UvrB monomer. DNA wrap is dependent on ATP binding by UvrB and probably causes local melting of the DNA helix, facilitating insertion of UvrB beta-hairpin between the DNA strands. Then UvrB probes one DNA strand for the presence of a lesion. If a lesion is found the UvrA subunits dissociate and the UvrB-DNA preincision complex is formed. This complex is subsequently bound by UvrC and the second UvrB is released. If no lesion is found, the DNA wraps around the other UvrB subunit that will check the other stand for damage. In Staphylococcus epidermidis (strain ATCC 12228 / FDA PCI 1200), this protein is UvrABC system protein B.